The following is a 412-amino-acid chain: DNA primase DnaG (412 aa).

Residues 165-243 (PELIIVEGRA…KLDYVARAPT (79 aa)) enclose the Toprim domain. The Mg(2+) site is built by glutamate 171, aspartate 216, and aspartate 218.

It belongs to the archaeal DnaG primase family. In terms of assembly, forms a ternary complex with MCM helicase and DNA. Component of the archaeal exosome complex. It depends on Mg(2+) as a cofactor.

The catalysed reaction is ssDNA + n NTP = ssDNA/pppN(pN)n-1 hybrid + (n-1) diphosphate.. Its function is as follows. RNA polymerase that catalyzes the synthesis of short RNA molecules used as primers for DNA polymerase during DNA replication. Also part of the exosome, which is a complex involved in RNA degradation. Acts as a poly(A)-binding protein that enhances the interaction between heteromeric, adenine-rich transcripts and the exosome. This chain is DNA primase DnaG, found in Sulfolobus acidocaldarius (strain ATCC 33909 / DSM 639 / JCM 8929 / NBRC 15157 / NCIMB 11770).